The following is a 343-amino-acid chain: Signaling lymphocytic activation molecule (343 aa).

The N-terminal stretch at 1–24 is a signal peptide; sequence MDPKGSLSWRILLFLSLAFELSYG. At 25–242 the chain is on the extracellular side; sequence TGGGVMDCPV…KQESSSESSP (218 aa). In terms of domain architecture, Ig-like V-type spans 29–138; that stretch reads VMDCPVILQK…VQQFCKQLKL (110 aa). N-linked (GlcNAc...) asparagine glycosylation is found at Asn54, Asn58, Asn103, Asn126, Asn151, Asn158, Asn192, Asn211, and Asn226. Residues 145 to 228 form the Ig-like C2-type domain; that stretch reads PEIKVLNKTQ…SSISRTFNLS (84 aa). 2 disulfides stabilise this stretch: Cys161-Cys232 and Cys167-Cys212. The chain crosses the membrane as a helical span at residues 243 to 265; that stretch reads WMQYTLVPLGVVIIFILVFTAII. Residues 266 to 343 are Cytoplasmic-facing; it reads MMKRQGKSNH…VYASVTLPES (78 aa). An ITSM 1 motif is present at residues 286-291; it reads TIYAQV. Residues Tyr288, Tyr315, and Tyr335 each carry the phosphotyrosine; by FYN modification. The short motif at 313 to 318 is the SH2-binding element; the sequence is TIYVAA. The segment at 320 to 343 is disordered; it reads EPAPESVQEPNPTTVYASVTLPES. Residues 327 to 343 show a composition bias toward polar residues; it reads QEPNPTTVYASVTLPES. The ITSM 2 motif lies at 333–338; it reads TVYASV.

As to quaternary structure, interacts (via cytoplasmic domain) with SH2D1A and SH2D1B; SH2D1A mediates association with FYN; SH2D1A binds to phosphorylated and not phosphorylated ITSM 1. Interacts (via cytoplasmic domain phosphorylated on tyrosine residues) with INPP5D and PTPN11; presence of SH2D1A facilitates binding to INPP5D. Interacts with MAP4K1. Interacts with PIK3C3, BECN1 and UVRAG; indicative for an association with PI3K complex II (PI3KC3-C2). Post-translationally, phosphorylated on tyrosine residues by FYN.

It localises to the cell membrane. Its function is as follows. Self-ligand receptor of the signaling lymphocytic activation molecule (SLAM) family. SLAM receptors triggered by homo- or heterotypic cell-cell interactions are modulating the activation and differentiation of a wide variety of immune cells and thus are involved in the regulation and interconnection of both innate and adaptive immune response. Activities are controlled by presence or absence of small cytoplasmic adapter proteins, SH2D1A/SAP and/or SH2D1B/EAT-2. SLAMF1-induced signal-transduction events in T-lymphocytes are different from those in B-cells. Two modes of SLAMF1 signaling seem to exist: one depending on SH2D1A (and perhaps SH2D1B) and another in which protein-tyrosine phosphatase 2C (PTPN11)-dependent signal transduction operates. Initially it has been proposed that association with SH2D1A prevents binding to inhibitory effectors including INPP5D/SHIP1 and PTPN11/SHP-2. However, signaling is also regulated by SH2D1A which can simultaneously interact with and recruit FYN which subsequently phosphorylates and activates SLAMF1. Mediates IL-2-independent proliferation of activated T-cells during immune responses and induces IFN-gamma production. Downstreaming signaling involves INPP5D, DOK1 and DOK2 leading to inhibited IFN-gamma production in T-cells, and PRKCQ, BCL10 and NFKB1 leading to increased T-cell activation and Th2 cytokine production. Promotes T-cell receptor-induced IL-4 secretion by CD4(+) cells. Inhibits antigen receptor-mediated production of IFN-gamma, but not IL-2, in CD4(-)/CD8(-) T-cells. Required for IL-4 production by germinal centers T follicular helper (T(Fh))cells. May inhibit CD40-induced signal transduction in monocyte-derived dendritic cells. May play a role in allergic responses and may regulate allergen-induced Th2 cytokine and Th1 cytokine secretion. In conjunction with SLAMF6 controls the transition between positive selection and the subsequent expansion and differentiation of the thymocytic natural killer T (NKT) cell lineage. Involved in the peripheral differentiation of indifferent natural killer T (iNKT) cells toward a regulatory NKT2 type. In macrophages involved in down-regulation of IL-12, TNF-alpha and nitric oxide in response to lipopolysaccharide (LPS). In B-cells activates the ERK signaling pathway independently of SH2D1A but implicating both, SYK and INPP5D, and activates Akt signaling dependent on SYK and SH2D1A. In conjunction with CD84/SLAMF5 and SLAMF6 may be a negative regulator of the humoral immune response. In terms of biological role, (Microbial infection) Involved in innate immune response against Gram-negative bacteria in macrophages; probably recognizes OmpC and/or OmpF on the bacterial surface, regulates phagosome maturation and recruitment of the PI3K complex II (PI3KC3-C2) leading to accumulated of PdtIns(3)P and NOX2 activity in the phagosomes. The polypeptide is Signaling lymphocytic activation molecule (Slamf1) (Mus musculus (Mouse)).